A 125-amino-acid chain; its full sequence is MKRNNNLIIPLLKIKKLLKRKGCKRIQNSALVFFSKVLQYLIEELLEISMNVSILNKTKKYRIKPKDISWSIQSDPEFNLLFRNIIIPSSGRISNKLNRIIQRSFKFKSFKFDDYEKSDYSSKTF.

This sequence belongs to the histone H2A family. As to quaternary structure, the nucleosome is a histone octamer containing two molecules each of H2A, H2B, H3 and H4 assembled in one H3-H4 heterotetramer and two H2A-H2B heterodimers. The octamer wraps approximately 147 bp of DNA.

The protein resides in the nucleus. The protein localises to the chromosome. In terms of biological role, core component of nucleosome which plays a central role in DNA double strand break (DSB) repair. Nucleosomes wrap and compact DNA into chromatin, limiting DNA accessibility to the cellular machineries which require DNA as a template. Histones thereby play a central role in transcription regulation, DNA repair, DNA replication and chromosomal stability. DNA accessibility is regulated via a complex set of post-translational modifications of histones, also called histone code, and nucleosome remodeling. In Dictyostelium discoideum (Social amoeba), this protein is Histone H2A.v3 (H2Av3).